The chain runs to 203 residues: Small ribosomal subunit protein uS4 (203 aa).

The S4 RNA-binding domain occupies 93–156 (RRLDNVVYRL…MKVPAILEAV (64 aa)).

It belongs to the universal ribosomal protein uS4 family. In terms of assembly, part of the 30S ribosomal subunit. Contacts protein S5. The interaction surface between S4 and S5 is involved in control of translational fidelity.

One of the primary rRNA binding proteins, it binds directly to 16S rRNA where it nucleates assembly of the body of the 30S subunit. Functionally, with S5 and S12 plays an important role in translational accuracy. The sequence is that of Small ribosomal subunit protein uS4 from Streptococcus agalactiae serotype Ia (strain ATCC 27591 / A909 / CDC SS700).